The chain runs to 104 residues: UPF0145 protein VIBHAR_02090 (104 aa).

Belongs to the UPF0145 family.

The protein is UPF0145 protein VIBHAR_02090 of Vibrio campbellii (strain ATCC BAA-1116).